The sequence spans 596 residues: Beta-fructofuranosidase, insoluble isoenzyme 7 (596 aa).

The N-terminal stretch at 1-24 (MARLGLAVCAASFHLFLLLASTSS) is a signal peptide. Substrate is bound by residues 51 to 54 (WQND), Q70, and W78. D54 is a catalytic residue. N82 is a glycosylation site (N-linked (GlcNAc...) asparagine). Substrate-binding positions include 115 to 116 (WS), 179 to 180 (RD), and E234. N330 carries an N-linked (GlcNAc...) asparagine glycan. C432 and C478 are joined by a disulfide. N552 is a glycosylation site (N-linked (GlcNAc...) asparagine).

Belongs to the glycosyl hydrolase 32 family. As to expression, expressed in roots, leaves and flowers. Weakly expressed in seeds.

Its subcellular location is the secreted. It localises to the extracellular space. The protein resides in the apoplast. It is found in the cell wall. It catalyses the reaction Hydrolysis of terminal non-reducing beta-D-fructofuranoside residues in beta-D-fructofuranosides.. Functionally, may play a role in sucrose partitioning during seed development. The polypeptide is Beta-fructofuranosidase, insoluble isoenzyme 7 (CIN7) (Oryza sativa subsp. japonica (Rice)).